We begin with the raw amino-acid sequence, 175 residues long: uncharacterized protein (175 aa).

Residues 113–175 are disordered; it reads AQLPRDSRGN…RTRSGGLERL (63 aa).

This is an uncharacterized protein from Bos taurus (Bovine).